The chain runs to 186 residues: Peptidyl-tRNA hydrolase (186 aa).

Residue tyrosine 14 coordinates tRNA. Histidine 19 functions as the Proton acceptor in the catalytic mechanism. Residues phenylalanine 64, asparagine 66, and asparagine 112 each contribute to the tRNA site.

It belongs to the PTH family. Monomer.

Its subcellular location is the cytoplasm. The catalysed reaction is an N-acyl-L-alpha-aminoacyl-tRNA + H2O = an N-acyl-L-amino acid + a tRNA + H(+). In terms of biological role, hydrolyzes ribosome-free peptidyl-tRNAs (with 1 or more amino acids incorporated), which drop off the ribosome during protein synthesis, or as a result of ribosome stalling. Its function is as follows. Catalyzes the release of premature peptidyl moieties from peptidyl-tRNA molecules trapped in stalled 50S ribosomal subunits, and thus maintains levels of free tRNAs and 50S ribosomes. The chain is Peptidyl-tRNA hydrolase from Mycoplasma mycoides subsp. mycoides SC (strain CCUG 32753 / NCTC 10114 / PG1).